Here is a 272-residue protein sequence, read N- to C-terminus: Shikimate dehydrogenase (NADP(+)) (272 aa).

Shikimate contacts are provided by residues 14 to 16 (SKS) and Thr61. Lys65 functions as the Proton acceptor in the catalytic mechanism. Glu77 serves as a coordination point for NADP(+). Asn86 and Asp102 together coordinate shikimate. NADP(+)-binding positions include 126-130 (GAGGA), 149-154 (NRTASR), and Met213. Tyr215 lines the shikimate pocket. Gly237 contacts NADP(+).

Belongs to the shikimate dehydrogenase family. In terms of assembly, homodimer.

It carries out the reaction shikimate + NADP(+) = 3-dehydroshikimate + NADPH + H(+). Its pathway is metabolic intermediate biosynthesis; chorismate biosynthesis; chorismate from D-erythrose 4-phosphate and phosphoenolpyruvate: step 4/7. Involved in the biosynthesis of the chorismate, which leads to the biosynthesis of aromatic amino acids. Catalyzes the reversible NADPH linked reduction of 3-dehydroshikimate (DHSA) to yield shikimate (SA). The polypeptide is Shikimate dehydrogenase (NADP(+)) (Salmonella typhimurium (strain LT2 / SGSC1412 / ATCC 700720)).